Consider the following 778-residue polypeptide: Beta-phellandrene synthase (neryl-diphosphate-cyclizing), chloroplastic (778 aa).

A chloroplast-targeting transit peptide spans 1–36; the sequence is MIVGYRSTIITLSHPKLGNGKTISSNAIFQRSCRVR. The Mg(2+) site is built by Asp-531, Asn-676, and Glu-684. Positions 531 to 535 match the DDXXD motif motif; it reads DDHFE.

It belongs to the terpene synthase family. Tpse subfamily. Requires Mg(2+) as cofactor. As to expression, trichomes.

Its subcellular location is the plastid. The protein localises to the chloroplast. The catalysed reaction is neryl diphosphate = beta-phellandrene + diphosphate. Monoterpene synthase catalyzing the production of beta-phellandrene from neryl diphosphate. Also produces lower amounts of delta-2-carene, alpha-phellandrene and limonene. When incubated in vitro with geranyl diphosphate, catalyzes the formation of acyclic myrcene and ocimene as major products in addition to beta-phellandrene. This chain is Beta-phellandrene synthase (neryl-diphosphate-cyclizing), chloroplastic (PHS1), found in Solanum lycopersicum (Tomato).